A 536-amino-acid polypeptide reads, in one-letter code: Chaperonin GroEL 2 (536 aa).

Residues threonine 29–proline 32, aspartate 86–threonine 90, glycine 413, asparagine 476–alanine 478, and aspartate 492 each bind ATP.

The protein belongs to the chaperonin (HSP60) family. As to quaternary structure, forms a cylinder of 14 subunits composed of two heptameric rings stacked back-to-back. Interacts with the co-chaperonin GroES.

Its subcellular location is the cytoplasm. It carries out the reaction ATP + H2O + a folded polypeptide = ADP + phosphate + an unfolded polypeptide.. In terms of biological role, together with its co-chaperonin GroES, plays an essential role in assisting protein folding. The GroEL-GroES system forms a nano-cage that allows encapsulation of the non-native substrate proteins and provides a physical environment optimized to promote and accelerate protein folding. The protein is Chaperonin GroEL 2 of Moorella thermoacetica (strain ATCC 39073 / JCM 9320).